The following is a 530-amino-acid chain: Phosphoenolpyruvate carboxykinase (ATP) (530 aa).

The substrate site is built by Arg-58, Tyr-195, and Lys-201. Residues Lys-201, His-220, and 236 to 244 (GLSGTGKTT) contribute to the ATP site. Positions 201 and 220 each coordinate Mn(2+). Asp-257 provides a ligand contact to Mn(2+). ATP is bound by residues Glu-285, Arg-321, 440-441 (RI), and Thr-446. Arg-321 contacts substrate.

It belongs to the phosphoenolpyruvate carboxykinase (ATP) family. Mn(2+) serves as cofactor.

It is found in the cytoplasm. It catalyses the reaction oxaloacetate + ATP = phosphoenolpyruvate + ADP + CO2. It participates in carbohydrate biosynthesis; gluconeogenesis. Its function is as follows. Involved in the gluconeogenesis. Catalyzes the conversion of oxaloacetate (OAA) to phosphoenolpyruvate (PEP) through direct phosphoryl transfer between the nucleoside triphosphate and OAA. The protein is Phosphoenolpyruvate carboxykinase (ATP) of Staphylococcus aureus (strain bovine RF122 / ET3-1).